The sequence spans 228 residues: Triosephosphate isomerase (228 aa).

Residue 9–11 (NFK) coordinates substrate. H93 functions as the Electrophile in the catalytic mechanism. Catalysis depends on E141, which acts as the Proton acceptor. Substrate contacts are provided by residues I146, G180, and 201-202 (AS).

The protein belongs to the triosephosphate isomerase family. In terms of assembly, homotetramer; dimer of dimers.

It localises to the cytoplasm. It carries out the reaction D-glyceraldehyde 3-phosphate = dihydroxyacetone phosphate. Its pathway is carbohydrate biosynthesis; gluconeogenesis. It participates in carbohydrate degradation; glycolysis; D-glyceraldehyde 3-phosphate from glycerone phosphate: step 1/1. In terms of biological role, involved in the gluconeogenesis. Catalyzes stereospecifically the conversion of dihydroxyacetone phosphate (DHAP) to D-glyceraldehyde-3-phosphate (G3P). This is Triosephosphate isomerase from Metallosphaera sedula (strain ATCC 51363 / DSM 5348 / JCM 9185 / NBRC 15509 / TH2).